Here is a 114-residue protein sequence, read N- to C-terminus: MAEPEQDIGEKPAVRIQNPKENDFIEIELKRQELSYQNLLNVSCCELGIKPERVEKIRKLPNTLLRKDKDIRRLRDFQEVELILMKNGSSRLTEYVPSLTERPCYDSKAAKMTY.

The chain is Putative ANKRD40 C-terminal-like protein from Homo sapiens (Human).